Reading from the N-terminus, the 605-residue chain is ABC transporter E family member 2 (605 aa).

The 30-residue stretch at 46–75 folds into the 4Fe-4S ferredoxin-type domain; sequence KLAFISEELCIGCGICVKKCPFEAIQIINL. ABC transporter domains follow at residues 70–315 and 344–568; these read IQII…FLAG and IQSY…LSHL. ATP contacts are provided by residues 110–117 and 381–388; these read GTNGIGKS and GENGTGKT.

Belongs to the ABC transporter superfamily. ABCE family. Expressed in roots, stems, leaves, flowers and siliques.

The protein resides in the membrane. The sequence is that of ABC transporter E family member 2 (ABCE2) from Arabidopsis thaliana (Mouse-ear cress).